Here is a 1135-residue protein sequence, read N- to C-terminus: Vinculin (1135 aa).

Residues 2 to 835 (PVFHTRTIES…GAVAKVREAF (834 aa)) form an N-terminal globular head region. Y100 carries the post-translational modification Phosphotyrosine. The interval 168–208 (MTKMAKMIDERQQELTHQEHRVMLVNSMNTVKELLPVLISA) is talin-interaction. A run of 3 repeats spans residues 259–369 (ASKD…KVEN), 370–479 (AARK…KTNR), and 480–589 (AVAN…RMQE). The interval 259–589 (ASKDTEAMKR…LKDLKARMQE (331 aa)) is 3 X 112 AA tandem repeats. Y537 and Y822 each carry phosphotyrosine. The linker (Pro-rich) stretch occupies residues 836–878 (QPQEPDFPPPPPDLEHLHLTDELAPPKPPLPEGEVPPPRPPPP). Residues 837-888 (PQEPDFPPPPPDLEHLHLTDELAPPKPPLPEGEVPPPRPPPPEEKDEEFPEQ) are disordered. A compositionally biased stretch (pro residues) spans 860 to 876 (PPKPPLPEGEVPPPRPP). Residues 879–1135 (EEKDEEFPEQ…RWVRKTPWYQ (257 aa)) form a C-terminal tail region. Facilitates phospholipid membrane insertion regions lie at residues 1004-1047 (RLVR…KRIR) and 1121-1135 (AGFTLRWVRKTPWYQ). Phosphotyrosine; by SRC-type Tyr-kinases is present on Y1134.

It belongs to the vinculin/alpha-catenin family. Exhibits self-association properties. Interacts with APBB1IP, NRAP and TLN1. Interacts with CTNNB1 and this interaction is necessary for its localization to the cell-cell junctions and for its function in regulating cell surface expression of E-cadherin. Post-translationally, phosphorylated; on serines, threonines and tyrosines. Phosphorylation on Tyr-1134 in activated platelets affects head-tail interactions and cell spreading but has no effect on actin binding nor on localization to focal adhesion plaques. Acetylated; mainly by myristic acid but also by a small amount of palmitic acid. Isoform Metavinculin is muscle-specific.

The protein resides in the cell membrane. It is found in the cell junction. The protein localises to the adherens junction. Its subcellular location is the focal adhesion. It localises to the cytoplasm. The protein resides in the cytoskeleton. It is found in the sarcolemma. The protein localises to the cell projection. Its subcellular location is the podosome. Actin filament (F-actin)-binding protein involved in cell-matrix adhesion and cell-cell adhesion. Regulates cell-surface E-cadherin expression and potentiates mechanosensing by the E-cadherin complex. May also play important roles in cell morphology and locomotion. This chain is Vinculin (VCL), found in Gallus gallus (Chicken).